We begin with the raw amino-acid sequence, 531 residues long: Arginine--tRNA ligase (531 aa).

The 'HIGH' region signature appears at 113 to 123; the sequence is ANPTGPLHIGH.

The protein belongs to the class-I aminoacyl-tRNA synthetase family. As to quaternary structure, monomer.

It is found in the cytoplasm. It carries out the reaction tRNA(Arg) + L-arginine + ATP = L-arginyl-tRNA(Arg) + AMP + diphosphate. The protein is Arginine--tRNA ligase of Campylobacter fetus subsp. fetus (strain 82-40).